Consider the following 2276-residue polypeptide: Protein Ycf2 (2276 aa).

1621-1628 contributes to the ATP binding site; it reads GSIGTGRS.

The protein belongs to the Ycf2 family.

The protein resides in the plastid. It is found in the chloroplast stroma. Functionally, probable ATPase of unknown function. Its presence in a non-photosynthetic plant (Epifagus virginiana) and experiments in tobacco indicate that it has an essential function which is probably not related to photosynthesis. The chain is Protein Ycf2 from Guizotia abyssinica (Niger).